The primary structure comprises 111 residues: Heavy metal-associated isoprenylated plant protein 10 (111 aa).

One can recognise an HMA domain in the interval 1–68; the sequence is MQETVVFEWG…ICDYVDITAV (68 aa). Residues 68 to 111 are disordered; it reads VGPEGQPAQNRNPVKKPEPKVIRGRPYPPQKKTPGKNSDECIIL. At Cys-108 the chain carries Cysteine methyl ester. Cys-108 carries S-farnesyl cysteine lipidation. The propeptide at 109–111 is removed in mature form; that stretch reads IIL.

This sequence belongs to the HIPP family.

Probable heavy-metal-binding protein. The protein is Heavy metal-associated isoprenylated plant protein 10 of Arabidopsis thaliana (Mouse-ear cress).